The following is a 448-amino-acid chain: Cysteine--tRNA ligase (448 aa).

Cys29 is a Zn(2+) binding site. Positions 31–41 match the 'HIGH' region motif; the sequence is PTVYNYIHIGN. Residues Cys212, His237, and Glu241 each contribute to the Zn(2+) site. The 'KMSKS' region motif lies at 269-273; sequence KMSKS. Lys272 provides a ligand contact to ATP.

This sequence belongs to the class-I aminoacyl-tRNA synthetase family. As to quaternary structure, monomer. The cofactor is Zn(2+).

It is found in the cytoplasm. The catalysed reaction is tRNA(Cys) + L-cysteine + ATP = L-cysteinyl-tRNA(Cys) + AMP + diphosphate. This chain is Cysteine--tRNA ligase, found in Streptococcus equi subsp. zooepidemicus (strain MGCS10565).